A 446-amino-acid chain; its full sequence is Mannan endo-1,6-alpha-mannosidase DCW1 (446 aa).

An N-terminal signal peptide occupies residues 1–18 (MRLVTLLSGLVSLVSVFG). Residues asparagine 31, asparagine 81, asparagine 106, asparagine 200, asparagine 222, asparagine 237, asparagine 262, asparagine 278, asparagine 285, asparagine 334, asparagine 391, and asparagine 397 are each glycosylated (N-linked (GlcNAc...) asparagine). Residues 389–408 (PYNATNGGNSTGDGAAGTKP) are disordered. The GPI-anchor amidated serine moiety is linked to residue serine 422. The propeptide at 423–446 (RAGAGIITAIIGISIIACALWLVY) is removed in mature form.

The protein belongs to the glycosyl hydrolase 76 family.

The protein resides in the secreted. Its subcellular location is the cell wall. The protein localises to the cell membrane. It carries out the reaction Random hydrolysis of (1-&gt;6)-alpha-D-mannosidic linkages in unbranched (1-&gt;6)-mannans.. In terms of biological role, required for normal synthesis of the cell wall. This is Mannan endo-1,6-alpha-mannosidase DCW1 (DCW1) from Candida glabrata (strain ATCC 2001 / BCRC 20586 / JCM 3761 / NBRC 0622 / NRRL Y-65 / CBS 138) (Yeast).